We begin with the raw amino-acid sequence, 354 residues long: MKSITFFVFNICSILALLSHCEDNDIYSFDIVNETNWLKIAKNIFKGKSPSNFTIIPFNNTGSSNDNESNKEESVLLIRKKIKSNKNHDSSIISGDTVNGDISDLNYTASNFSDNSEDIEDNQKYPTTSYNSFNHLNSNIAFNEESEYIEINSESDLENKIKDINIKSNLEENNTMNESGKVDSKYELTGDEKCGKSLKLGNISNQTNQETITQSLSVGEILCIDLEGNAGTGYLWVLLGIHKDEPIINPENFPTKLTKKSFFSEEISVTQPKKYKIDEHDSSKNVNREIESPEQKESDSKPKKPQMQLLGGPDRMRSVIKGHKPGKYYIVYSYYRPFSPTSGANTKIIYVTVQ.

A signal peptide spans methionine 1–cysteine 21. Positions leucine 226 to tryptophan 236 match the BC loop; binds and inhibits the active site cavity of cysteine proteases motif. The segment at lysine 274 to arginine 317 is disordered. Residues tyrosine 275 to proline 302 show a composition bias toward basic and acidic residues.

This sequence belongs to the protease inhibitor I71 family. In terms of assembly, oligomer; probably composed of 10 monomers. Post-translationally, during the liver stage, proteolytically cleaved.

The protein resides in the secreted. The protein localises to the cytoplasmic vesicle. It is found in the secretory vesicle. Its subcellular location is the microneme. It localises to the host cytoplasm. The protein resides in the parasitophorous vacuole lumen. Cysteine protease inhibitor. Required for the invasion of host erythrocytes by merozoites. In the mosquito vector, essential for the gliding motility of hemocoel sporozoites and, therefore, for salivary gland invasion and the subsequent transmission from the mosquito to the mammalian host. Required for the invasion of host hepatocytes. During the liver stage, may prevent host hepatocyte cell death likely by inhibiting host cysteine proteases. This Plasmodium berghei (strain Anka) protein is Falstatin.